The following is a 148-amino-acid chain: UPF0178 protein CA_C2825 (148 aa).

This sequence belongs to the UPF0178 family.

The protein is UPF0178 protein CA_C2825 of Clostridium acetobutylicum (strain ATCC 824 / DSM 792 / JCM 1419 / IAM 19013 / LMG 5710 / NBRC 13948 / NRRL B-527 / VKM B-1787 / 2291 / W).